The following is a 473-amino-acid chain: 3-isopropylmalate dehydratase large subunit (473 aa).

Cys-348, Cys-413, and Cys-416 together coordinate [4Fe-4S] cluster.

This sequence belongs to the aconitase/IPM isomerase family. LeuC type 1 subfamily. In terms of assembly, heterodimer of LeuC and LeuD. [4Fe-4S] cluster is required as a cofactor.

It carries out the reaction (2R,3S)-3-isopropylmalate = (2S)-2-isopropylmalate. It functions in the pathway amino-acid biosynthesis; L-leucine biosynthesis; L-leucine from 3-methyl-2-oxobutanoate: step 2/4. Catalyzes the isomerization between 2-isopropylmalate and 3-isopropylmalate, via the formation of 2-isopropylmaleate. The chain is 3-isopropylmalate dehydratase large subunit from Parvibaculum lavamentivorans (strain DS-1 / DSM 13023 / NCIMB 13966).